The following is a 97-amino-acid chain: Venom peptide HsVx1 (97 aa).

The signal sequence occupies residues 1–20 (MSHLRIAVTFLCTLFALTAG).

The protein belongs to the scorpion La1-like peptide family. In terms of processing, contains 4 disulfide bonds. In terms of tissue distribution, expressed by the venom gland.

The protein localises to the secreted. In Heterometrus spinifer (Asia giant forest scorpion), this protein is Venom peptide HsVx1.